The sequence spans 541 residues: Probable inorganic phosphate transporter 1-12 (541 aa).

Over 1 to 26 the chain is Cytoplasmic; the sequence is MGRQDQQLQVLNALDAAKTQWYHFTA. A helical transmembrane segment spans residues 27–47; it reads IIVAGMGFFTDAYDLFCISLV. Topologically, residues 48–70 are extracellular; it reads TKLLGRIYYTDPASPTPGSLPPN. Residues 71-91 traverse the membrane as a helical segment; that stretch reads IAAAVNGVALCGTLSGQLFFG. The Cytoplasmic portion of the chain corresponds to 92–100; it reads WLGDKLGRK. A helical membrane pass occupies residues 101-121; the sequence is SVYGMTLLLMVICSIASGLSF. Over 122 to 124 the chain is Extracellular; sequence SHT. Residues 125-145 traverse the membrane as a helical segment; that stretch reads PTSVMATLCFFRFWLGFGIGG. Residues 146-163 are Cytoplasmic-facing; it reads DYPLSATIMSEYANKKTR. Residues 164–184 traverse the membrane as a helical segment; sequence GAFIAAVFAMQGFGILAGGVV. Over 185 to 213 the chain is Extracellular; it reads TLAMSAGFQAAFPAPAYEVNAAASTVPQA. The chain crosses the membrane as a helical span at residues 214–234; sequence DYVWRIILMLGALPAILTYYW. The Cytoplasmic portion of the chain corresponds to 235–297; that stretch reads RMKMPETARY…ARFAKRHGAH (63 aa). The helical transmembrane segment at 298-318 threads the bilayer; the sequence is LLGTAATWFLVDVAYYSQNLF. Over 319–349 the chain is Extracellular; that stretch reads QKDIFTSIHWIPKARTMSELEEVFRISRAQT. Residues 350 to 370 traverse the membrane as a helical segment; that stretch reads LIALCGTVPGYWFTVFLIDII. Residues 371 to 374 are Cytoplasmic-facing; it reads GRFK. The chain crosses the membrane as a helical span at residues 375–395; that stretch reads IQLLGFAGMTAFMLGLAIPYH. The Extracellular segment spans residues 396-403; that stretch reads HWTMPGNQ. The helical transmembrane segment at 404 to 424 threads the bilayer; that stretch reads VIFVFLYGFTFFFANFGPNAT. Over 425–443 the chain is Cytoplasmic; sequence TFIVPAEIFPARLRSTCHG. Residues 444 to 464 traverse the membrane as a helical segment; sequence ISAASGKAGAIIGAFGFLYAA. Residues 465 to 484 are Extracellular-facing; that stretch reads QPQDKAHVDAGYKPGIGVRN. A helical membrane pass occupies residues 485-505; sequence ALFVLAGCNLVGFLMTWMLVP. At 506–541 the chain is on the cytoplasmic side; it reads ESKGKSLEEMSGEADDEEASANGGATAVNSSGVEMV. Residues 512–541 form a disordered region; the sequence is LEEMSGEADDEEASANGGATAVNSSGVEMV. The segment covering 515–524 has biased composition (acidic residues); it reads MSGEADDEEA. Over residues 532-541 the composition is skewed to polar residues; that stretch reads AVNSSGVEMV.

The protein belongs to the major facilitator superfamily. Phosphate:H(+) symporter (TC 2.A.1.9) family.

The protein localises to the membrane. Functionally, high-affinity transporter for external inorganic phosphate. The chain is Probable inorganic phosphate transporter 1-12 (PHT1-12) from Oryza sativa subsp. japonica (Rice).